The following is an 87-amino-acid chain: UPF0250 protein BUsg_472 (87 aa).

This sequence belongs to the UPF0250 family.

This is UPF0250 protein BUsg_472 from Buchnera aphidicola subsp. Schizaphis graminum (strain Sg).